The sequence spans 465 residues: Phenylalanine--tRNA ligase alpha subunit (465 aa).

Residues Thr309, 348-350, and Phe388 contribute to the L-phenylalanine site; that span reads QLD. A Mg(2+)-binding site is contributed by Glu390.

Belongs to the class-II aminoacyl-tRNA synthetase family. Phe-tRNA synthetase alpha subunit type 2 subfamily. Tetramer of two alpha and two beta subunits. Mg(2+) is required as a cofactor.

It localises to the cytoplasm. The catalysed reaction is tRNA(Phe) + L-phenylalanine + ATP = L-phenylalanyl-tRNA(Phe) + AMP + diphosphate + H(+). The polypeptide is Phenylalanine--tRNA ligase alpha subunit (Sulfolobus acidocaldarius (strain ATCC 33909 / DSM 639 / JCM 8929 / NBRC 15157 / NCIMB 11770)).